The following is a 140-amino-acid chain: MTSPLLESRRQLRKCAFQALMSLEFGTDVETACRFAYTHDREDTAVQLPAFLIDLVSGVQAKKEELDKQITQHLKAGWTIERLTLVERNLLRLGVFEITSFDTPQLVAVNEAIELAKDFSDQKSARFINGLLSQFVTEEQ.

It belongs to the NusB family.

Its function is as follows. Involved in transcription antitermination. Required for transcription of ribosomal RNA (rRNA) genes. Binds specifically to the boxA antiterminator sequence of the ribosomal RNA (rrn) operons. This is Transcription antitermination protein NusB from Streptococcus pneumoniae (strain JJA).